The following is a 216-amino-acid chain: Dimethylamine corrinoid protein 1 (216 aa).

One can recognise a B12-binding N-terminal domain in the interval 1-91; sequence MTSKEELLQE…DMPAGTETKK (91 aa). In terms of domain architecture, B12-binding spans 92–216; it reads LGVIVNGTVE…AKAKELLVGK (125 aa). A methylcob(III)alamin-binding site is contributed by His-105.

The protein belongs to the methylamine corrinoid protein family.

It functions in the pathway one-carbon metabolism; methanogenesis from dimethylamine. Its function is as follows. Acts as a methyl group carrier between MtbB and MtbA. This is Dimethylamine corrinoid protein 1 (mtbC1) from Methanosarcina mazei (strain ATCC BAA-159 / DSM 3647 / Goe1 / Go1 / JCM 11833 / OCM 88) (Methanosarcina frisia).